The sequence spans 400 residues: Formate-dependent phosphoribosylglycinamide formyltransferase (400 aa).

N(1)-(5-phospho-beta-D-ribosyl)glycinamide contacts are provided by residues 22–23 (EL) and Glu82. ATP-binding positions include Arg115, Lys157, 162-167 (SSGKGQ), 197-200 (EGFI), and Glu205. The 196-residue stretch at 120–315 (RLAAETLGVP…EFELHARAIL (196 aa)) folds into the ATP-grasp domain. 2 residues coordinate Mg(2+): Glu274 and Glu286. N(1)-(5-phospho-beta-D-ribosyl)glycinamide contacts are provided by residues Asp293, Lys362, and 369–370 (RR).

Belongs to the PurK/PurT family. Homodimer.

The catalysed reaction is N(1)-(5-phospho-beta-D-ribosyl)glycinamide + formate + ATP = N(2)-formyl-N(1)-(5-phospho-beta-D-ribosyl)glycinamide + ADP + phosphate + H(+). The protein operates within purine metabolism; IMP biosynthesis via de novo pathway; N(2)-formyl-N(1)-(5-phospho-D-ribosyl)glycinamide from N(1)-(5-phospho-D-ribosyl)glycinamide (formate route): step 1/1. Functionally, involved in the de novo purine biosynthesis. Catalyzes the transfer of formate to 5-phospho-ribosyl-glycinamide (GAR), producing 5-phospho-ribosyl-N-formylglycinamide (FGAR). Formate is provided by PurU via hydrolysis of 10-formyl-tetrahydrofolate. In Variovorax paradoxus (strain S110), this protein is Formate-dependent phosphoribosylglycinamide formyltransferase.